The following is an 83-amino-acid chain: UPF0297 protein CKR_1221 (83 aa).

This sequence belongs to the UPF0297 family.

This Clostridium kluyveri (strain NBRC 12016) protein is UPF0297 protein CKR_1221.